The following is a 513-amino-acid chain: GMP synthase [glutamine-hydrolyzing] (513 aa).

The Glutamine amidotransferase type-1 domain maps to 3–192; it reads TVVVLDYGSQ…VSKVAKMEKN (190 aa). Residue C80 is the Nucleophile of the active site. Catalysis depends on residues H166 and E168. Residues 193–388 form the GMPS ATP-PPase domain; sequence WKMTDFIEEK…LGLPDEMINR (196 aa). Residue 220 to 226 participates in ATP binding; the sequence is SGGVDSS.

In terms of assembly, homodimer.

The enzyme catalyses XMP + L-glutamine + ATP + H2O = GMP + L-glutamate + AMP + diphosphate + 2 H(+). Its pathway is purine metabolism; GMP biosynthesis; GMP from XMP (L-Gln route): step 1/1. Catalyzes the synthesis of GMP from XMP. The chain is GMP synthase [glutamine-hydrolyzing] from Thermosipho africanus (strain TCF52B).